The following is a 140-amino-acid chain: Nucleoside diphosphate kinase (140 aa).

6 residues coordinate ATP: K11, F59, R87, T93, R104, and N114. Residue H117 is the Pros-phosphohistidine intermediate of the active site.

Belongs to the NDK family. As to quaternary structure, homotetramer. Mg(2+) serves as cofactor.

The protein localises to the cytoplasm. The enzyme catalyses a 2'-deoxyribonucleoside 5'-diphosphate + ATP = a 2'-deoxyribonucleoside 5'-triphosphate + ADP. The catalysed reaction is a ribonucleoside 5'-diphosphate + ATP = a ribonucleoside 5'-triphosphate + ADP. Its function is as follows. Major role in the synthesis of nucleoside triphosphates other than ATP. The ATP gamma phosphate is transferred to the NDP beta phosphate via a ping-pong mechanism, using a phosphorylated active-site intermediate. The protein is Nucleoside diphosphate kinase of Rickettsia canadensis (strain McKiel).